Consider the following 229-residue polypeptide: Endonuclease V (229 aa).

Residues Asp43 and Asp111 each contribute to the Mg(2+) site.

Belongs to the endonuclease V family. Requires Mg(2+) as cofactor.

The protein resides in the cytoplasm. The catalysed reaction is Endonucleolytic cleavage at apurinic or apyrimidinic sites to products with a 5'-phosphate.. DNA repair enzyme involved in the repair of deaminated bases. Selectively cleaves double-stranded DNA at the second phosphodiester bond 3' to a deoxyinosine leaving behind the intact lesion on the nicked DNA. This is Endonuclease V from Rippkaea orientalis (strain PCC 8801 / RF-1) (Cyanothece sp. (strain PCC 8801)).